We begin with the raw amino-acid sequence, 83 residues long: Putative beta-neurotoxin RjAa12f (83 aa).

The N-terminal stretch at 1–18 (MKILIFIIASFMLIGVEC) is a signal peptide. The 64-residue stretch at 19–82 (KEGYPMGRDG…VWDSSTNKCG (64 aa)) folds into the LCN-type CS-alpha/beta domain. 4 disulfides stabilise this stretch: Cys-29–Cys-81, Cys-33–Cys-55, Cys-40–Cys-62, and Cys-44–Cys-64. A propeptide is located at residue Gly-83.

Contains 4 disulfide bonds. In terms of tissue distribution, expressed by the venom gland.

It localises to the secreted. Beta toxins bind voltage-independently at site-4 of sodium channels (Nav) and shift the voltage of activation toward more negative potentials thereby affecting sodium channel activation and promoting spontaneous and repetitive firing. This toxin is lethal to insects (A.domestica). It is not toxic to mice and does not affect mammal F11 sodium channels. The sequence is that of Putative beta-neurotoxin RjAa12f from Rhopalurus junceus (Caribbean blue scorpion).